Here is a 171-residue protein sequence, read N- to C-terminus: Sigma intracellular receptor 2 (171 aa).

The Cytoplasmic portion of the chain corresponds to 1-6 (MAVCAR). The helical transmembrane segment at 7–27 (LLEWIFFFYFFSHIPITLLVD) threads the bilayer. In terms of domain architecture, EXPERA spans 8–153 (LEWIFFFYFF…PYLLVPVLLL (146 aa)). At 28–66 (LQAVLPPSLYPQELLDLMKWYTVAFKDHLMANPPPWFKS) the chain is on the lumenal side. The chain crosses the membrane as a helical span at residues 67 to 87 (FVYCEAILQLPFFPVAAYAFF). Positions 73 and 75 each coordinate cholesterol. The Cytoplasmic portion of the chain corresponds to 88 to 97 (KGGCKWIRIP). A helical transmembrane segment spans residues 98–118 (AIVYSAHVATTVIAIIGHILF). The Lumenal portion of the chain corresponds to 119 to 137 (GEFPKSDVIAPLTQKDRLT). The helical transmembrane segment at 138–158 (LVSIYAPYLLVPVLLLLTMLF) threads the bilayer. Topologically, residues 159-171 (SPRYRQEEKRKRK) are cytoplasmic. The short motif at 167-171 (KRKRK) is the ER retention motif element.

It belongs to the TMEM97/sigma-2 receptor family. As to quaternary structure, homodimer.

The protein resides in the rough endoplasmic reticulum membrane. Its subcellular location is the nucleus membrane. Sigma-2 receptor which contributes to ameliorate dysfunctional cellular processes and slow degenerative progression by regulating cell functions including cholesterol biosynthesis/trafficking, membrane trafficking, autophagy, lipid membrane-bound protein trafficking, and receptor stabilization at the cell surface. Forms a ternary complex with PGRMC1 receptor and low density lipoprotein receptor/LDLR at the plasma membrane, which increases LDLR-mediated LDL cholesterol internalization. Decreases lysosomal sterol transporter NPC1 availability to the cell, probably through NPC1-binding, hence controlling lipid transport, including cholesterol and LBPA, outside of late endosome/lysosome. Binds regio- and stereoselective ligand 20(S)-hydroxycholesterol (20(S)-OHC), thereby linking OHC binding to cholesterol homeostasis. Also able to bind cholesterol. Binds histatin 1 (Hst 1)/HN1 salivary peptide at the ER membrane, which is critical for increasing mitochondria-ER contacts and stimulating Hst1 wound healing properties. May alter the activity of some cytochrome P450 proteins. Although shows homologies with sterol isomerases (EXPERA domain), not able to catalyze sterol isomerization. However, may act as sensors of these molecules. Acts as a quality control factor in the ER, promoting the proteolytic degradation of nonproductive and extramitochondrial precursor proteins in the ER membrane thus removing them from the ER surface. The polypeptide is Sigma intracellular receptor 2 (tmem97) (Xenopus tropicalis (Western clawed frog)).